Consider the following 196-residue polypeptide: Chromophore lyase CpcT/CpeT (196 aa).

The protein belongs to the CpcT/CpeT biliprotein lyase family.

Functionally, covalently attaches a chromophore to Cys residue(s) of phycobiliproteins. The chain is Chromophore lyase CpcT/CpeT from Synechocystis sp. (strain ATCC 27184 / PCC 6803 / Kazusa).